We begin with the raw amino-acid sequence, 82 residues long: Polyketide biosynthesis acyl-carrier-protein AcpK (82 aa).

Positions 4–79 (QRIFEVLITN…ELAEVLYDKV (76 aa)) constitute a Carrier domain. Serine 39 bears the O-(pantetheine 4'-phosphoryl)serine mark.

4'-phosphopantetheine is transferred from CoA to a specific serine of apo-ACP by sfp.

Its subcellular location is the cytoplasm. Its pathway is antibiotic biosynthesis; bacillaene biosynthesis. Its function is as follows. Involved in some intermediate steps for the synthesis of the antibiotic polyketide bacillaene which is involved in secondary metabolism. The chain is Polyketide biosynthesis acyl-carrier-protein AcpK (acpK) from Bacillus subtilis (strain 168).